A 207-amino-acid polypeptide reads, in one-letter code: Holliday junction resolvase RecU (207 aa).

The interval 1 to 30 is disordered; it reads MPIRYPNGQPYSRSPKQGQAKKPLPADTYS. Positions 87, 89, 102, and 121 each coordinate Mg(2+).

It belongs to the RecU family. Mg(2+) serves as cofactor.

The protein localises to the cytoplasm. The enzyme catalyses Endonucleolytic cleavage at a junction such as a reciprocal single-stranded crossover between two homologous DNA duplexes (Holliday junction).. Its function is as follows. Endonuclease that resolves Holliday junction intermediates in genetic recombination. Cleaves mobile four-strand junctions by introducing symmetrical nicks in paired strands. Promotes annealing of linear ssDNA with homologous dsDNA. Required for DNA repair, homologous recombination and chromosome segregation. The polypeptide is Holliday junction resolvase RecU (Shouchella clausii (strain KSM-K16) (Alkalihalobacillus clausii)).